The following is a 158-amino-acid chain: SsrA-binding protein (158 aa).

Belongs to the SmpB family.

It is found in the cytoplasm. In terms of biological role, required for rescue of stalled ribosomes mediated by trans-translation. Binds to transfer-messenger RNA (tmRNA), required for stable association of tmRNA with ribosomes. tmRNA and SmpB together mimic tRNA shape, replacing the anticodon stem-loop with SmpB. tmRNA is encoded by the ssrA gene; the 2 termini fold to resemble tRNA(Ala) and it encodes a 'tag peptide', a short internal open reading frame. During trans-translation Ala-aminoacylated tmRNA acts like a tRNA, entering the A-site of stalled ribosomes, displacing the stalled mRNA. The ribosome then switches to translate the ORF on the tmRNA; the nascent peptide is terminated with the 'tag peptide' encoded by the tmRNA and targeted for degradation. The ribosome is freed to recommence translation, which seems to be the essential function of trans-translation. The protein is SsrA-binding protein of Caldicellulosiruptor saccharolyticus (strain ATCC 43494 / DSM 8903 / Tp8T 6331).